The chain runs to 231 residues: Large ribosomal subunit protein uL1 (231 aa).

Belongs to the universal ribosomal protein uL1 family. Part of the 50S ribosomal subunit.

Binds directly to 23S rRNA. The L1 stalk is quite mobile in the ribosome, and is involved in E site tRNA release. In terms of biological role, protein L1 is also a translational repressor protein, it controls the translation of the L11 operon by binding to its mRNA. The sequence is that of Large ribosomal subunit protein uL1 from Pseudomonas savastanoi pv. phaseolicola (strain 1448A / Race 6) (Pseudomonas syringae pv. phaseolicola (strain 1448A / Race 6)).